We begin with the raw amino-acid sequence, 216 residues long: 3-isopropylmalate dehydratase small subunit (216 aa).

This sequence belongs to the LeuD family. LeuD type 1 subfamily. Heterodimer of LeuC and LeuD.

It catalyses the reaction (2R,3S)-3-isopropylmalate = (2S)-2-isopropylmalate. The protein operates within amino-acid biosynthesis; L-leucine biosynthesis; L-leucine from 3-methyl-2-oxobutanoate: step 2/4. In terms of biological role, catalyzes the isomerization between 2-isopropylmalate and 3-isopropylmalate, via the formation of 2-isopropylmaleate. This is 3-isopropylmalate dehydratase small subunit from Ralstonia nicotianae (strain ATCC BAA-1114 / GMI1000) (Ralstonia solanacearum).